Reading from the N-terminus, the 385-residue chain is Ribosomal RNA large subunit methyltransferase G (385 aa).

This sequence belongs to the methyltransferase superfamily. RlmG family.

The protein localises to the cytoplasm. It carries out the reaction guanosine(1835) in 23S rRNA + S-adenosyl-L-methionine = N(2)-methylguanosine(1835) in 23S rRNA + S-adenosyl-L-homocysteine + H(+). Its function is as follows. Specifically methylates the guanine in position 1835 (m2G1835) of 23S rRNA. The protein is Ribosomal RNA large subunit methyltransferase G of Vibrio campbellii (strain ATCC BAA-1116).